We begin with the raw amino-acid sequence, 304 residues long: Sulfotransferase 1C3 (304 aa).

Position 56–61 (56–61 (KSGTTW)) interacts with 3'-phosphoadenylyl sulfate. A substrate-binding site is contributed by 115 to 117 (KTH). The active-site Proton acceptor is H117. Residues R139, S147, Y202, 236–241 (TSFDVM), and 264–268 (FMRKG) contribute to the 3'-phosphoadenylyl sulfate site.

This sequence belongs to the sulfotransferase 1 family. Not detectable in any of the tissues tested. As to expression, expressed in the small intestine.

Its subcellular location is the cytoplasm. It carries out the reaction an alcohol + 3'-phosphoadenylyl sulfate = an alkyl sulfate + adenosine 3',5'-bisphosphate + H(+). The catalysed reaction is a phenol + 3'-phosphoadenylyl sulfate = an aryl sulfate + adenosine 3',5'-bisphosphate + H(+). The enzyme catalyses lithocholate + 3'-phosphoadenylyl sulfate = lithocholate sulfate + adenosine 3',5'-bisphosphate + H(+). Sulfotransferase that utilizes 3'-phospho-5'-adenylyl sulfate (PAPS) as sulfonate donor. Has sulfotransferase activity towards various substrates, such as bile acids, thyroid hormones and toward xenobiotic compounds such as chloro phenols and hydroxypyrenes. Lithocholic acid appears to be the best substrate among the endogenous compounds tested and 3,3',5,5'-tetrachloro-4,4'-biphenyldiol shows the highest specific activity among the xenobiotic compounds. Its function is as follows. Exhibits weak sulphating activity and only toward chloro phenols (pentachlorophenol and 3,3',5,5'-tetrachloro-4,4'-biphenyldiol). The sequence is that of Sulfotransferase 1C3 (SULT1C3) from Homo sapiens (Human).